The following is a 298-amino-acid chain: Inosose dehydratase (298 aa).

Belongs to the IolE/MocC family. Glutathione serves as cofactor. The cofactor is Co(2+). It depends on Mn(2+) as a cofactor.

The enzyme catalyses scyllo-inosose = 3D-3,5/4-trihydroxycyclohexane-1,2-dione + H2O. Its pathway is polyol metabolism; myo-inositol degradation into acetyl-CoA; acetyl-CoA from myo-inositol: step 2/7. Its function is as follows. Catalyzes the dehydration of inosose (2-keto-myo-inositol, 2KMI or 2,4,6/3,5-pentahydroxycyclohexanone) to 3D-(3,5/4)-trihydroxycyclohexane-1,2-dione (D-2,3-diketo-4-deoxy-epi-inositol). This is Inosose dehydratase from Bacillus velezensis (strain DSM 23117 / BGSC 10A6 / LMG 26770 / FZB42) (Bacillus amyloliquefaciens subsp. plantarum).